An 856-amino-acid polypeptide reads, in one-letter code: Phosphatidylglycerol lysyltransferase (856 aa).

Helical transmembrane passes span 7-27, 51-71, 88-108, 128-148, 161-181, 208-228, 235-255, 280-300, 342-362, 375-395, 420-440, 459-479, and 501-521; these read ALSI…IYQS, LFML…YDYV, VSWI…AGVG, IAWL…FVAA, PWLW…LAVS, SVVE…AMGI, VFGV…PGGF, IVLY…FFAA, SLSL…SLPI, ALLL…ILPI, FLKG…VLLV, IFAV…AGFI, and HATI…TVVY.

It belongs to the LPG synthase family.

Its subcellular location is the cell membrane. It catalyses the reaction L-lysyl-tRNA(Lys) + a 1,2-diacyl-sn-glycero-3-phospho-(1'-sn-glycerol) = a 1,2-diacyl-sn-glycero-3-phospho-1'-(3'-O-L-lysyl)-sn-glycerol + tRNA(Lys). Functionally, catalyzes the transfer of a lysyl group from L-lysyl-tRNA(Lys) to membrane-bound phosphatidylglycerol (PG), which produces lysylphosphatidylglycerol (LPG), one of the components of the bacterial membrane with a positive net charge. LPG synthesis contributes to the resistance to cationic antimicrobial peptides (CAMPs) and likely protects B.subtilis against its own CAMPs and against those produced by competiting microorganisms (bacteriocins). In fact, the modification of anionic phosphatidylglycerol with positively charged L-lysine results in repulsion of the peptides. This chain is Phosphatidylglycerol lysyltransferase (mprF), found in Bacillus subtilis (strain 168).